Here is a 62-residue protein sequence, read N- to C-terminus: MASVCDICSKGPGFGNRISHSHRRTRRRWNPNIQTVRTRVGGTPKRLNVCTSCIKAGKVDRF.

Belongs to the bacterial ribosomal protein bL28 family.

This Thermobifida fusca (strain YX) protein is Large ribosomal subunit protein bL28.